Consider the following 430-residue polypeptide: Serine--tRNA ligase (430 aa).

237–239 serves as a coordination point for L-serine; that stretch reads TAE. 268-270 is an ATP binding site; that stretch reads RAE. Glutamate 291 contacts L-serine. Position 355 to 358 (355 to 358) interacts with ATP; that stretch reads EISS. Serine 391 is an L-serine binding site.

Belongs to the class-II aminoacyl-tRNA synthetase family. Type-1 seryl-tRNA synthetase subfamily. In terms of assembly, homodimer. The tRNA molecule binds across the dimer.

The protein localises to the cytoplasm. It carries out the reaction tRNA(Ser) + L-serine + ATP = L-seryl-tRNA(Ser) + AMP + diphosphate + H(+). The enzyme catalyses tRNA(Sec) + L-serine + ATP = L-seryl-tRNA(Sec) + AMP + diphosphate + H(+). It participates in aminoacyl-tRNA biosynthesis; selenocysteinyl-tRNA(Sec) biosynthesis; L-seryl-tRNA(Sec) from L-serine and tRNA(Sec): step 1/1. In terms of biological role, catalyzes the attachment of serine to tRNA(Ser). Is also able to aminoacylate tRNA(Sec) with serine, to form the misacylated tRNA L-seryl-tRNA(Sec), which will be further converted into selenocysteinyl-tRNA(Sec). The sequence is that of Serine--tRNA ligase from Serratia proteamaculans (strain 568).